We begin with the raw amino-acid sequence, 184 residues long: GTP-dependent dephospho-CoA kinase (184 aa).

Aspartate 33, valine 34, aspartate 52, lysine 54, and glutamate 103 together coordinate GTP.

This sequence belongs to the GTP-dependent DPCK family.

The catalysed reaction is 3'-dephospho-CoA + GTP = GDP + CoA + H(+). Its pathway is cofactor biosynthesis; coenzyme A biosynthesis. Functionally, catalyzes the GTP-dependent phosphorylation of the 3'-hydroxyl group of dephosphocoenzyme A to form coenzyme A (CoA). This chain is GTP-dependent dephospho-CoA kinase, found in Ignicoccus hospitalis (strain KIN4/I / DSM 18386 / JCM 14125).